The sequence spans 928 residues: G-protein coupled receptor family C group 6 member A (928 aa).

The first 20 residues, 1-20 (MALSFVFITCFMILLDTSQS), serve as a signal peptide directing secretion. Over 21 to 594 (CHTPDDFVAI…EYLDWDDSLA (574 aa)) the chain is Extracellular. Asparagine 332 and asparagine 555 each carry an N-linked (GlcNAc...) asparagine glycan. A helical transmembrane segment spans residues 595 to 615 (LLLIALSLLGIAFVLAVGIIF). Topologically, residues 616-630 (TRNLKTPVVKSSGGL) are cytoplasmic. The chain crosses the membrane as a helical span at residues 631 to 651 (VVCYVMLACHALNFASTGFFI). The Extracellular segment spans residues 652-669 (GEPQDFTCKTRQTLFGVS). The helical transmembrane segment at 670 to 690 (FTLCVSCILTKSLKILLAFSF) threads the bilayer. Topologically, residues 691–706 (DPTLKTFLKCLYRPVP) are cytoplasmic. The helical transmembrane segment at 707-727 (IVLTCTGIQVVICTLWLVLAA) threads the bilayer. The Extracellular segment spans residues 728-750 (PTVEENTSLPRVIILECEEGSAL). A helical transmembrane segment spans residues 751 to 771 (AFGTMLGYIAVLAFICFVFAF). Over 772 to 784 (KGRKLPENYNEAK) the chain is Cytoplasmic. A helical membrane pass occupies residues 785–805 (FLTFGMLIYFIAWITFIPVYA). The Extracellular segment spans residues 806-812 (TTFGKYL). Residues 813 to 833 (PAVEIIVILISNYGILCCTFF) traverse the membrane as a helical segment. Topologically, residues 834–928 (PKCYIILCKQ…TLHQKRSSSI (95 aa)) are cytoplasmic.

The protein belongs to the G-protein coupled receptor 3 family. Homodimer; disulfide-linked. In terms of processing, N-glycosylated. In terms of tissue distribution, high expression in soft palate. Weak expression in kidney, liver, lung and brain. No expression detected in heart, testis, skeletal muscle amd spleen.

The protein localises to the cell membrane. In terms of biological role, receptor activated by multiple ligands, including osteocalcin (BGLAP), basic amino acids, and various cations. Activated by amino acids with a preference for basic amino acids such as L-Lys, L-Arg and L-ornithine but also by small and polar amino acids. The L-alpha amino acids respond is augmented by divalent cations Ca(2+) and Mg(2+). Seems to act through a G(q)/G(11) and G(i)-coupled pathway. Regulates testosterone production by acting as a ligand for uncarboxylated osteocalcin hormone: osteocalcin-binding at the surface of Leydig cells initiates a signaling response that promotes the expression of enzymes required for testosterone synthesis in a CREB-dependent manner. Mediates the non-genomic effects of androgens in multiple tissue. May coordinate nutritional and hormonal anabolic signals through the sensing of extracellular amino acids, osteocalcin, divalent ions and its responsiveness to anabolic steroids. The sequence is that of G-protein coupled receptor family C group 6 member A (Gprc6a) from Rattus norvegicus (Rat).